The following is a 171-amino-acid chain: Crossover junction endodeoxyribonuclease RuvC (171 aa).

Residues Asp7, Glu66, and Asp138 contribute to the active site. Mg(2+) contacts are provided by Asp7, Glu66, and Asp138.

This sequence belongs to the RuvC family. As to quaternary structure, homodimer which binds Holliday junction (HJ) DNA. The HJ becomes 2-fold symmetrical on binding to RuvC with unstacked arms; it has a different conformation from HJ DNA in complex with RuvA. In the full resolvosome a probable DNA-RuvA(4)-RuvB(12)-RuvC(2) complex forms which resolves the HJ. Requires Mg(2+) as cofactor.

Its subcellular location is the cytoplasm. The enzyme catalyses Endonucleolytic cleavage at a junction such as a reciprocal single-stranded crossover between two homologous DNA duplexes (Holliday junction).. In terms of biological role, the RuvA-RuvB-RuvC complex processes Holliday junction (HJ) DNA during genetic recombination and DNA repair. Endonuclease that resolves HJ intermediates. Cleaves cruciform DNA by making single-stranded nicks across the HJ at symmetrical positions within the homologous arms, yielding a 5'-phosphate and a 3'-hydroxyl group; requires a central core of homology in the junction. The consensus cleavage sequence is 5'-(A/T)TT(C/G)-3'. Cleavage occurs on the 3'-side of the TT dinucleotide at the point of strand exchange. HJ branch migration catalyzed by RuvA-RuvB allows RuvC to scan DNA until it finds its consensus sequence, where it cleaves and resolves the cruciform DNA. The protein is Crossover junction endodeoxyribonuclease RuvC of Francisella philomiragia subsp. philomiragia (strain ATCC 25017 / CCUG 19701 / FSC 153 / O#319-036).